The following is a 240-amino-acid chain: Glutathione-independent glyoxalase hsp3102 (240 aa).

Residues C141, H142, and E175 contribute to the active site.

The protein belongs to the peptidase C56 family. HSP31-like subfamily.

It is found in the cytoplasm. The protein resides in the nucleus. The enzyme catalyses methylglyoxal + H2O = (R)-lactate + H(+). In terms of biological role, catalyzes the conversion of methylglyoxal (MG) to D-lactate in a single glutathione (GSH)-independent step. May play a role in detoxifying endogenously produced glyoxals. Involved in protection against reactive oxygen species (ROS). The chain is Glutathione-independent glyoxalase hsp3102 from Schizosaccharomyces pombe (strain 972 / ATCC 24843) (Fission yeast).